Here is a 658-residue protein sequence, read N- to C-terminus: Exoribonuclease 2 (658 aa).

The RNB domain occupies 189-531 (REDLTALHFI…NHRLIKAVLT (343 aa)). An S1 motif domain is found at 576 to 658 (KPTFQAEIQD…ETRSIVGTLC (83 aa)).

It belongs to the RNR ribonuclease family. RNase II subfamily.

The protein resides in the cytoplasm. It catalyses the reaction Exonucleolytic cleavage in the 3'- to 5'-direction to yield nucleoside 5'-phosphates.. Functionally, involved in mRNA degradation. Hydrolyzes single-stranded polyribonucleotides processively in the 3' to 5' direction. The polypeptide is Exoribonuclease 2 (Pasteurella multocida (strain Pm70)).